The chain runs to 359 residues: Histidinol-phosphate aminotransferase (359 aa).

Residue Lys-217 is modified to N6-(pyridoxal phosphate)lysine.

This sequence belongs to the class-II pyridoxal-phosphate-dependent aminotransferase family. Histidinol-phosphate aminotransferase subfamily. Homodimer. Requires pyridoxal 5'-phosphate as cofactor.

It carries out the reaction L-histidinol phosphate + 2-oxoglutarate = 3-(imidazol-4-yl)-2-oxopropyl phosphate + L-glutamate. It functions in the pathway amino-acid biosynthesis; L-histidine biosynthesis; L-histidine from 5-phospho-alpha-D-ribose 1-diphosphate: step 7/9. The protein is Histidinol-phosphate aminotransferase of Citrobacter koseri (strain ATCC BAA-895 / CDC 4225-83 / SGSC4696).